The following is a 4749-amino-acid chain: Dynein heavy chain domain-containing protein 1 (4749 aa).

Residues 1-18 (MKPHSQTSPPSLPMPSTS) are compositionally biased toward low complexity. 3 disordered regions span residues 1–27 (MKPH…TQKP), 275–308 (ESSD…KKSS), and 2690–2785 (ESLA…KLQS). The span at 2696–2716 (CEEEEVEEEKVPEVESEEEIA) shows a compositional bias: acidic residues. Over residues 2738–2749 (QATTGSFLSENS) the composition is skewed to polar residues. The stretch at 3197 to 3224 (CQHQESLIENLVRQHDALKAQQEVFLEQ) forms a coiled coil. Positions 3568-3667 (PPKQNRSLEP…SLPSCLTVLS (100 aa)) are disordered. A compositionally biased stretch (basic and acidic residues) spans 3578-3593 (SPKESKEKFHVTKQDS). A coiled-coil region spans residues 3594 to 3636 (GDNTEDELEDENNEEEDEANEQRKEQKAEENKIQGENEQEVQE). Residues 3595 to 3612 (DNTEDELEDENNEEEDEA) are compositionally biased toward acidic residues. The segment covering 3613–3628 (NEQRKEQKAEENKIQG) has biased composition (basic and acidic residues). Low complexity predominate over residues 3644–3655 (ESSGSHSSLPSE). Polar residues predominate over residues 3656-3667 (TQSLPSCLTVLS). Coiled-coil stretches lie at residues 3818–3838 (MVRT…LEDQ) and 4431–4451 (ERQL…LQAL).

It belongs to the dynein heavy chain family. Expressed in spermatozoa (at protein level).

The protein localises to the cell projection. Its subcellular location is the cilium. It is found in the flagellum. Its function is as follows. Essential for the normal function of sperm flagella axonemes. In Mus musculus (Mouse), this protein is Dynein heavy chain domain-containing protein 1 (Dnhd1).